Consider the following 31-residue polypeptide: Photosystem II reaction center protein M (31 aa).

Residues 5–25 form a helical membrane-spanning segment; sequence ILALMATALFIIIPTAFLIIL.

Belongs to the PsbM family. PSII is composed of 1 copy each of membrane proteins PsbA, PsbB, PsbC, PsbD, PsbE, PsbF, PsbH, PsbI, PsbJ, PsbK, PsbL, PsbM, PsbT, PsbX, PsbY, PsbZ, Psb30/Ycf12, at least 3 peripheral proteins of the oxygen-evolving complex and a large number of cofactors. It forms dimeric complexes.

The protein resides in the plastid. The protein localises to the chloroplast thylakoid membrane. In terms of biological role, one of the components of the core complex of photosystem II (PSII). PSII is a light-driven water:plastoquinone oxidoreductase that uses light energy to abstract electrons from H(2)O, generating O(2) and a proton gradient subsequently used for ATP formation. It consists of a core antenna complex that captures photons, and an electron transfer chain that converts photonic excitation into a charge separation. This subunit is found at the monomer-monomer interface. In Mesostigma viride (Green alga), this protein is Photosystem II reaction center protein M.